A 287-amino-acid polypeptide reads, in one-letter code: ATP synthase gamma chain (287 aa).

The protein belongs to the ATPase gamma chain family. As to quaternary structure, F-type ATPases have 2 components, CF(1) - the catalytic core - and CF(0) - the membrane proton channel. CF(1) has five subunits: alpha(3), beta(3), gamma(1), delta(1), epsilon(1). CF(0) has three main subunits: a, b and c.

The protein resides in the cell inner membrane. In terms of biological role, produces ATP from ADP in the presence of a proton gradient across the membrane. The gamma chain is believed to be important in regulating ATPase activity and the flow of protons through the CF(0) complex. This is ATP synthase gamma chain from Xylella fastidiosa (strain M23).